The following is a 988-amino-acid chain: Band 4.1-like protein 2 (988 aa).

Residues 1–190 (MTTEVGSASE…GAAKRETKEV (190 aa)) form a disordered region. At Thr-2 the chain carries N-acetylthreonine. Residue Ser-7 is modified to Phosphoserine. A compositionally biased stretch (basic and acidic residues) spans 22–31 (ASKEKAKEVE). Residues Ser-38, Ser-86, and Ser-116 each carry the phosphoserine modification. 2 stretches are compositionally biased toward basic and acidic residues: residues 110 to 148 (ILGK…EAKP) and 160 to 190 (EEVR…TKEV). Residues Ser-201, Ser-379, Ser-395, Ser-492, Ser-543, Ser-555, Ser-561, and Ser-582 each carry the phosphoserine modification. The 282-residue stretch at 211–492 (VLAKVTLLDG…EHHTFYRLVS (282 aa)) folds into the FERM domain. Positions 495–651 (QPPKTKFLTL…TPEPRPSEWE (157 aa)) are hydrophilic. Positions 514-594 (TQAQTREAST…KATPLPAEGK (81 aa)) are disordered. Over residues 555–567 (SPPGEGSVPGPGV) the composition is skewed to low complexity. Position 606 is a phosphotyrosine (Tyr-606). Phosphoserine occurs at positions 610 and 630. Disordered regions lie at residues 639–788 (MAST…QAGA) and 804–839 (QKLP…VPHL). Residues 652–837 (KRRVTPLPFQ…DPHRVNGEVP (186 aa)) form a spectrin--actin-binding region. Basic and acidic residues predominate over residues 673–686 (VEEKKRAEVGKDES). Position 698 is a phosphoserine (Ser-698). A compositionally biased stretch (basic and acidic residues) spans 704–717 (GETRKVEPVAHKDS). Over residues 718 to 729 (TSLSSESSSSSS) the composition is skewed to low complexity. A compositionally biased stretch (basic and acidic residues) spans 739–751 (QPHHRVTEGTIRE). Position 745 is a phosphothreonine (Thr-745). Residues 752 to 764 (EQEECDEELEEEP) are compositionally biased toward acidic residues. Over residues 828–839 (DPHRVNGEVPHL) the composition is skewed to basic and acidic residues. Residues 838-988 (HLDLDGLPEI…ETELAEEGEE (151 aa)) are C-terminal (CTD).

As to quaternary structure, interacts with FCGR1A. Interacts with TRPC4. Interacts (via CTD domain) with FKBP2. Interacts with NUMA1; this interaction is negatively regulated by CDK1 during metaphase and promotes anaphase-specific localization of NUMA1 in symmetrically dividing cells. In terms of tissue distribution, widely expressed.

It localises to the cytoplasm. The protein resides in the cytoskeleton. The protein localises to the cell cortex. It is found in the cell membrane. Functionally, required for dynein-dynactin complex and NUMA1 recruitment at the mitotic cell cortex during anaphase. This is Band 4.1-like protein 2 from Mus musculus (Mouse).